The primary structure comprises 377 residues: N-acetyldiaminopimelate deacetylase (377 aa).

Residue Asp70 is part of the active site. Glu129 functions as the Proton acceptor in the catalytic mechanism.

The protein belongs to the peptidase M20A family. N-acetyldiaminopimelate deacetylase subfamily.

The catalysed reaction is N-acetyl-(2S,6S)-2,6-diaminopimelate + H2O = (2S,6S)-2,6-diaminopimelate + acetate. The protein operates within amino-acid biosynthesis; L-lysine biosynthesis via DAP pathway; LL-2,6-diaminopimelate from (S)-tetrahydrodipicolinate (acetylase route): step 3/3. Its function is as follows. Catalyzes the conversion of N-acetyl-diaminopimelate to diaminopimelate and acetate. This Geobacillus thermodenitrificans (strain NG80-2) protein is N-acetyldiaminopimelate deacetylase.